A 118-amino-acid polypeptide reads, in one-letter code: Acidic phospholipase A2 homolog (118 aa).

Cystine bridges form between C11–C70, C25–C117, C27–C43, C42–C98, C49–C91, C59–C84, and C77–C89.

It belongs to the phospholipase A2 family. Group I subfamily. A49 sub-subfamily. Expressed by the venom gland.

It is found in the secreted. Snake venom phospholipase A2 (PLA2) homolog that lacks both catalytic and neurotoxicity activities. The protein is Acidic phospholipase A2 homolog of Bungarus fasciatus (Banded krait).